The following is an 831-amino-acid chain: Serine/threonine-protein kinase ATG1 (831 aa).

Residues 21 to 321 enclose the Protein kinase domain; sequence YSVEKEIGKG…FTDFFNNEVV (301 aa). ATP-binding positions include 27 to 35 and Lys-50; that span reads IGKGSFAVV. Asp-168 functions as the Proton acceptor in the catalytic mechanism. 2 stretches are compositionally biased toward polar residues: residues 360 to 382 and 405 to 419; these read QQES…TGVR and NSQN…ASQK. A disordered region spans residues 360-419; that stretch reads QQESAHIPPTQTDENTSVQTGVRRTSGKERLATNHPPHQQIHPEDNSQNPEQSYQSASQK.

The protein belongs to the protein kinase superfamily. Ser/Thr protein kinase family. APG1/unc-51/ULK1 subfamily. As to quaternary structure, homodimer. Forms a ternary complex with ATG13 and ATG17.

Its subcellular location is the cytoplasm. The protein localises to the preautophagosomal structure membrane. It catalyses the reaction L-seryl-[protein] + ATP = O-phospho-L-seryl-[protein] + ADP + H(+). The catalysed reaction is L-threonyl-[protein] + ATP = O-phospho-L-threonyl-[protein] + ADP + H(+). In terms of biological role, serine/threonine protein kinase involved in the cytoplasm to vacuole transport (Cvt) and found to be essential in autophagy, where it is required for the formation of autophagosomes. Involved in the clearance of protein aggregates which cannot be efficiently cleared by the proteasome. Required for selective autophagic degradation of the nucleus (nucleophagy) as well as for mitophagy which contributes to regulate mitochondrial quantity and quality by eliminating the mitochondria to a basal level to fulfill cellular energy requirements and preventing excess ROS production. Also involved in endoplasmic reticulum-specific autophagic process, in selective removal of ER-associated degradation (ERAD) substrates. Plays a key role in ATG9 and ATG23 cycling through the pre-autophagosomal structure and is necessary to promote ATG18 binding to ATG9 through phosphorylation of ATG9. Catalyzes phosphorylation of ATG4, decreasing the interaction between ATG4 and ATG8 and impairing deconjugation of PE-conjugated forms of ATG8. The chain is Serine/threonine-protein kinase ATG1 from Kluyveromyces lactis (strain ATCC 8585 / CBS 2359 / DSM 70799 / NBRC 1267 / NRRL Y-1140 / WM37) (Yeast).